We begin with the raw amino-acid sequence, 140 residues long: Gas vesicle protein O (140 aa).

A compositionally biased stretch (basic and acidic residues) spans 1–14 (MSDQGNEHANHDGI). A disordered region spans residues 1–61 (MSDQGNEHAN…DSTIGLSDAQ (61 aa)). The segment covering 39-56 (QTASDEAVSNQSPDSTIG) has biased composition (polar residues).

Belongs to the gas vesicle GvpO family. In terms of assembly, forms homodimers, forms a GvpN-GvpO heterodimer, interacts with GvpC, GvpF, GvpI and GvpL, might interact with GvpA.

Its subcellular location is the gas vesicle. It localises to the cytoplasm. A minor component of the gas vesicle (GV), may play a role in transcription and/or RNA stability and/or in GV assembly. Gas vesicles are small, hollow, gas filled protein structures found in some microorganisms. They allow positioning of halobacteria at the optimal depth for growth in the poorly aerated shallow brine pools of their habitat. Functionally, expression of a 9.5 kb mc-vac DNA fragment containing 2 divergently transcribed regions (gvpD-gvpE-gvpF-gvpG-gvpH-gvpI-gvpJ-gvpK-gvpL-gvpM and gvpA-gvpC-gvpN-gvpO) allows H.volcanii to produce gas vesicles. The polypeptide is Gas vesicle protein O (Haloferax mediterranei (strain ATCC 33500 / DSM 1411 / JCM 8866 / NBRC 14739 / NCIMB 2177 / R-4) (Halobacterium mediterranei)).